A 537-amino-acid chain; its full sequence is CTP synthase (537 aa).

Residues 1 to 269 (MNQTKYIFVT…DKVALKKLDL (269 aa)) are amidoligase domain. Residue S15 coordinates CTP. Residue S15 participates in UTP binding. 16–21 (SLGKGI) contributes to the ATP binding site. Y56 is an L-glutamine binding site. D73 serves as a coordination point for ATP. The Mg(2+) site is built by D73 and E143. Residues 150–152 (DIE), 190–195 (KTKPTQ), and K226 contribute to the CTP site. Residues 190 to 195 (KTKPTQ) and K226 each bind UTP. In terms of domain architecture, Glutamine amidotransferase type-1 spans 295–537 (SIGLVGKYVE…IAAAVKHKNK (243 aa)). G357 is an L-glutamine binding site. Catalysis depends on C384, which acts as the Nucleophile; for glutamine hydrolysis. L-glutamine contacts are provided by residues 385-388 (LGMQ), E408, and R465. Residues H510 and E512 contribute to the active site.

The protein belongs to the CTP synthase family. In terms of assembly, homotetramer.

It carries out the reaction UTP + L-glutamine + ATP + H2O = CTP + L-glutamate + ADP + phosphate + 2 H(+). It catalyses the reaction L-glutamine + H2O = L-glutamate + NH4(+). The catalysed reaction is UTP + NH4(+) + ATP = CTP + ADP + phosphate + 2 H(+). Its pathway is pyrimidine metabolism; CTP biosynthesis via de novo pathway; CTP from UDP: step 2/2. With respect to regulation, allosterically activated by GTP, when glutamine is the substrate; GTP has no effect on the reaction when ammonia is the substrate. The allosteric effector GTP functions by stabilizing the protein conformation that binds the tetrahedral intermediate(s) formed during glutamine hydrolysis. Inhibited by the product CTP, via allosteric rather than competitive inhibition. Catalyzes the ATP-dependent amination of UTP to CTP with either L-glutamine or ammonia as the source of nitrogen. Regulates intracellular CTP levels through interactions with the four ribonucleotide triphosphates. The chain is CTP synthase from Flavobacterium psychrophilum (strain ATCC 49511 / DSM 21280 / CIP 103535 / JIP02/86).